A 178-amino-acid polypeptide reads, in one-letter code: Probable DNA-directed RNA polymerase subunit delta (178 aa).

Residues 14-81 form the HTH HARE-type domain; that stretch reads LSMIEVAHAI…GENTWGLRTW (68 aa). The span at 120–143 shows a compositional bias: acidic residues; sequence DDDVIDYDSDDPEDEEVEAEDTTS. The segment at 120 to 178 is disordered; that stretch reads DDDVIDYDSDDPEDEEVEAEDTTSDDAPAFEDLSNDDDTDVLPDGIEGQLSELNEDDEN.

The protein belongs to the RpoE family. RNAP is composed of a core of 2 alpha, a beta and a beta' subunits. The core is associated with a delta subunit and one of several sigma factors.

In terms of biological role, participates in both the initiation and recycling phases of transcription. In the presence of the delta subunit, RNAP displays an increased specificity of transcription, a decreased affinity for nucleic acids, and an increased efficiency of RNA synthesis because of enhanced recycling. This is Probable DNA-directed RNA polymerase subunit delta from Pediococcus pentosaceus (strain ATCC 25745 / CCUG 21536 / LMG 10740 / 183-1w).